The chain runs to 150 residues: Large ribosomal subunit protein bL9 (150 aa).

This sequence belongs to the bacterial ribosomal protein bL9 family.

Functionally, binds to the 23S rRNA. This Streptococcus equi subsp. equi (strain 4047) protein is Large ribosomal subunit protein bL9.